The following is a 130-amino-acid chain: MNTVSVVQFLAVGCAVFVLYGRGVFAAEGVKKAGQHKDAELCLGSDGLGHRLDEFWYNDDMCQRFLCFKDDEGIMYEQIANCPIAIAEGDCTLKPGTKGHYPDCSPRRRIAPLRTKKKGKFKRNAFYLPY.

Positions M1 to A26 are cleaved as a signal peptide.

It belongs to the scoloptoxin-16 family. Contains 3 disulfide bonds. In terms of tissue distribution, expressed by the venom gland.

The protein resides in the secreted. In Ethmostigmus rubripes (Giant centipede), this protein is U-scoloptoxin(16)-Er4a.